The sequence spans 434 residues: AT-rich interactive domain-containing protein 5 (434 aa).

The interval 1–120 (MMADTEMQEQ…SSPHVPEESV (120 aa)) is disordered. Basic and acidic residues-rich tracts occupy residues 25–37 (ELEK…ERPK), 43–54 (DTTHTLDSDVHL), and 78–90 (RNGD…KKIT). The segment covering 92 to 102 (DGGQEETTLGE) has biased composition (polar residues). In terms of domain architecture, ARID spans 142-233 (PQDQEAFIKE…ALLEYEKHLR (92 aa)). The disordered stretch occupies residues 237 to 274 (ELNLPGSASLPSSGIEKEASSHQASGSGRTRRDAAARA). Residues 336–434 (AEVIDVGPPA…RLFVRVPFEQ (99 aa)) enclose the sHSP domain.

It belongs to the small heat shock protein (HSP20) family.

Its subcellular location is the nucleus. The chain is AT-rich interactive domain-containing protein 5 (ARID5) from Arabidopsis thaliana (Mouse-ear cress).